Here is a 266-residue protein sequence, read N- to C-terminus: Glucosamine-6-phosphate deaminase (266 aa).

D72 functions as the Proton acceptor; for enolization step in the catalytic mechanism. D141 (for ring-opening step) is an active-site residue. The active-site Proton acceptor; for ring-opening step is the H143. Catalysis depends on E148, which acts as the For ring-opening step.

The protein belongs to the glucosamine/galactosamine-6-phosphate isomerase family. NagB subfamily. As to quaternary structure, homohexamer.

It catalyses the reaction alpha-D-glucosamine 6-phosphate + H2O = beta-D-fructose 6-phosphate + NH4(+). It functions in the pathway amino-sugar metabolism; N-acetylneuraminate degradation; D-fructose 6-phosphate from N-acetylneuraminate: step 5/5. Allosterically activated by N-acetylglucosamine 6-phosphate (GlcNAc6P). Functionally, catalyzes the reversible isomerization-deamination of glucosamine 6-phosphate (GlcN6P) to form fructose 6-phosphate (Fru6P) and ammonium ion. The chain is Glucosamine-6-phosphate deaminase from Yersinia pseudotuberculosis serotype O:1b (strain IP 31758).